The sequence spans 367 residues: Protein RecA (367 aa).

73–80 (GPESSGKT) contacts ATP. Positions 345 to 367 (DEPVAKKASAKESKEAKELKEVE) are disordered.

The protein belongs to the RecA family.

It localises to the cytoplasm. Its function is as follows. Can catalyze the hydrolysis of ATP in the presence of single-stranded DNA, the ATP-dependent uptake of single-stranded DNA by duplex DNA, and the ATP-dependent hybridization of homologous single-stranded DNAs. It interacts with LexA causing its activation and leading to its autocatalytic cleavage. The chain is Protein RecA from Janthinobacterium sp. (strain Marseille) (Minibacterium massiliensis).